Here is a 166-residue protein sequence, read N- to C-terminus: NAD(P)H-quinone oxidoreductase subunit I, chloroplastic (166 aa).

2 4Fe-4S ferredoxin-type domains span residues 55–84 (GRIH…VDWK) and 95–124 (LNYS…MTEE). Residues cysteine 64, cysteine 67, cysteine 70, cysteine 74, cysteine 104, cysteine 107, cysteine 110, and cysteine 114 each contribute to the [4Fe-4S] cluster site.

It belongs to the complex I 23 kDa subunit family. NDH is composed of at least 16 different subunits, 5 of which are encoded in the nucleus. The cofactor is [4Fe-4S] cluster.

Its subcellular location is the plastid. The protein localises to the chloroplast thylakoid membrane. The enzyme catalyses a plastoquinone + NADH + (n+1) H(+)(in) = a plastoquinol + NAD(+) + n H(+)(out). It carries out the reaction a plastoquinone + NADPH + (n+1) H(+)(in) = a plastoquinol + NADP(+) + n H(+)(out). In terms of biological role, NDH shuttles electrons from NAD(P)H:plastoquinone, via FMN and iron-sulfur (Fe-S) centers, to quinones in the photosynthetic chain and possibly in a chloroplast respiratory chain. The immediate electron acceptor for the enzyme in this species is believed to be plastoquinone. Couples the redox reaction to proton translocation, and thus conserves the redox energy in a proton gradient. The polypeptide is NAD(P)H-quinone oxidoreductase subunit I, chloroplastic (Oteiza scandens (Climbing oteiza)).